Reading from the N-terminus, the 466-residue chain is Uridine kinase-like protein 3 (466 aa).

Positions 41 to 246 are uridine kinase; that stretch reads HGQPFVIGVA…IVQHIHTKLG (206 aa). Positions 256–466 are uracil phosphoribosyltransferase; it reads NLYVIQSTFQ…GDRYFGTDDE (211 aa). GTP is bound by residues Lys-280, Arg-289, and 323–326; that span reads CKKL. 2 residues coordinate 5-phospho-alpha-D-ribose 1-diphosphate: Arg-333 and Arg-358. Residue Arg-378 coordinates GTP. 5-phospho-alpha-D-ribose 1-diphosphate contacts are provided by residues Asp-384, 389–392, and Glu-455; that span reads TGNS. A uracil-binding site is contributed by 454–456; the sequence is GEF.

The protein in the N-terminal section; belongs to the uridine kinase family. It in the C-terminal section; belongs to the UPRTase family. Requires Mg(2+) as cofactor.

The catalysed reaction is UMP + diphosphate = 5-phospho-alpha-D-ribose 1-diphosphate + uracil. It catalyses the reaction cytidine + ATP = CMP + ADP + H(+). It carries out the reaction uridine + ATP = UMP + ADP + H(+). It functions in the pathway pyrimidine metabolism; UMP biosynthesis via salvage pathway; UMP from uracil: step 1/1. It participates in pyrimidine metabolism; CTP biosynthesis via salvage pathway; CTP from cytidine: step 1/3. The protein operates within pyrimidine metabolism; UMP biosynthesis via salvage pathway; UMP from uridine: step 1/1. Its activity is regulated as follows. Allosterically activated by GTP. In terms of biological role, involved in the pyrimidine salvage pathway. The uracil phosphoribosyltransferase (UPRT) activity, that catalyzes the conversion of uracil and 5-phospho-alpha-D-ribose 1-diphosphate (PRPP) to UMP and diphosphate, is unsure. This chain is Uridine kinase-like protein 3 (UKL3), found in Arabidopsis thaliana (Mouse-ear cress).